The chain runs to 88 residues: Small ribosomal subunit protein bS20 (88 aa).

The tract at residues 1 to 33 is disordered; it reads MANTSSAKKATRKIARRTAVNKSRRTQMRGSVR.

This sequence belongs to the bacterial ribosomal protein bS20 family.

Binds directly to 16S ribosomal RNA. This is Small ribosomal subunit protein bS20 from Rhodopseudomonas palustris (strain BisB5).